The chain runs to 443 residues: Acid phosphatase type 7 (443 aa).

The signal sequence occupies residues 1 to 23 (MAAAPPPPPPLLLLLLCVCAVFA). 3 N-linked (GlcNAc...) asparagine glycosylation sites follow: Asn-53, Asn-76, and Asn-126. Fe cation-binding residues include Asp-140, Asp-169, and Tyr-172. Asp-169 provides a ligand contact to Zn(2+). Asn-204 contacts Zn(2+). N-linked (GlcNAc...) asparagine glycosylation occurs at Asn-210. His-288 is a Zn(2+) binding site. N-linked (GlcNAc...) asparagine glycosylation occurs at Asn-313. His-338 lines the Zn(2+) pocket. His-340 is a Fe cation binding site. Residues Asn-355 and Asn-409 are each glycosylated (N-linked (GlcNAc...) asparagine).

It belongs to the metallophosphoesterase superfamily. Purple acid phosphatase family. Requires Fe cation as cofactor. The cofactor is Zn(2+).

It localises to the secreted. It carries out the reaction a phosphate monoester + H2O = an alcohol + phosphate. This is Acid phosphatase type 7 from Danio rerio (Zebrafish).